A 1411-amino-acid polypeptide reads, in one-letter code: Zinc finger protein 609 (1411 aa).

Disordered regions lie at residues 1-26 (MSLS…SGDE), 47-190 (QKLE…QPVP), 353-484 (PRFC…EPTV), 517-659 (AHAH…ARPI), 679-963 (ASPG…VIQQ), 1005-1125 (YEEQ…RQAE), 1153-1221 (KSED…LTQH), and 1270-1367 (GSKV…STHH). Serine 358, serine 361, and serine 379 each carry phosphoserine. Polar residues predominate over residues 377–401 (PNSNTPVNETATASDSKGTSNSSKT). At threonine 381 the chain carries Phosphothreonine. 6 positions are modified to phosphoserine: serine 413, serine 433, serine 446, serine 452, serine 467, and serine 470. Over residues 423 to 437 (ASSTSEDVKASPSSA) the composition is skewed to polar residues. A Glycyl lysine isopeptide (Lys-Gly) (interchain with G-Cter in SUMO2) cross-link involves residue lysine 479. The C2H2-type zinc finger occupies 495–520 (IDCPHPNCNKKYKHINGLKYHQAHAH). The span at 519–529 (AHTDDDSKPEA) shows a compositional bias: basic and acidic residues. The residue at position 533 (serine 533) is a Phosphoserine. A compositionally biased stretch (polar residues) spans 549-563 (NGASVSQKGSLSPAR). A phosphoserine mark is found at serine 576 and serine 578. Basic and acidic residues predominate over residues 626–649 (SLERKCMEKEKCKKPSSLKPEKIP). Positions 679–700 (ASPGSSSGLTATVAQAMPNSPQ) are enriched in polar residues. A compositionally biased stretch (basic residues) spans 726-736 (DKKKKDKKKKE). Serine 743 is subject to Phosphoserine. Threonine 746 is modified (phosphothreonine). The segment covering 751 to 764 (CRAEEGKSPFRESS) has biased composition (basic and acidic residues). The residue at position 758 (serine 758) is a Phosphoserine. Lysine 789 is covalently cross-linked (Glycyl lysine isopeptide (Lys-Gly) (interchain with G-Cter in SUMO2)). Residues 798–844 (FTDNAPSPSIGGSSRLENTTPTQPLTPLHVVTQNGAEASSVKTNSPA) show a composition bias toward polar residues. Serine 804 is modified (phosphoserine). A Phosphothreonine modification is found at threonine 823. Residues serine 842, serine 846, and serine 849 each carry the phosphoserine modification. Basic and acidic residues predominate over residues 855–876 (GEGKVDSVKSKDAEQLVKEGAK). Positions 897–908 (SYYSPSYAQSSP) are enriched in low complexity. A compositionally biased stretch (basic and acidic residues) spans 926-950 (TKRDEEPESIEGKVKNDICEEKKPE). The span at 952–963 (SSSSQQPSVIQQ) shows a compositional bias: low complexity. A compositionally biased stretch (basic and acidic residues) spans 1020–1042 (GVDKKAEMGLKEREAALKEEWKQ). The residue at position 1055 (serine 1055) is a Phosphoserine. A Glycyl lysine isopeptide (Lys-Gly) (interchain with G-Cter in SUMO2) cross-link involves residue lysine 1061. Composition is skewed to basic and acidic residues over residues 1097–1113 (LKVK…EASE), 1153–1187 (KSED…KEST), and 1195–1208 (TSEE…EPRP). Lysine 1153 is covalently cross-linked (Glycyl lysine isopeptide (Lys-Gly) (interchain with G-Cter in SUMO2)). The span at 1286-1296 (PSVTCKSSSES) shows a compositional bias: polar residues. Residue lysine 1297 forms a Glycyl lysine isopeptide (Lys-Gly) (interchain with G-Cter in SUMO2) linkage. Over residues 1328–1337 (GCGVVGGGGS) the composition is skewed to gly residues.

In terms of assembly, interacts (via N-terminus) with NIPBL. Interacts with INTS13; promoting association with the integrator complex. Isoform 1: Expressed in myoblasts and myotubes. Isoform 2: Expressed in myoblasts and myotubes, with a preference in undifferentiated myoblasts.

The protein localises to the nucleus. Transcription factor, which activates RAG1, and possibly RAG2, transcription. Through the regulation of RAG1/2 expression, may regulate thymocyte maturation. Along with NIPBL and the multiprotein complex Integrator, promotes cortical neuron migration during brain development by regulating the transcription of crucial genes in this process. Preferentially binds promoters containing paused RNA polymerase II. Up-regulates the expression of SEMA3A, NRP1, PLXND1 and GABBR2 genes, among others. Its function is as follows. Involved in the regulation of myoblast proliferation during myogenesis. This Homo sapiens (Human) protein is Zinc finger protein 609.